Reading from the N-terminus, the 588-residue chain is MRTHFCGLVDETLIGQTVTLAGWTDVARNLGGVCFIDLRDHEGIVQVTVEPVAGDDASAELFKVAASLGYEDVLQVEGVVRARHAVNDKLRTGKVEVIATRISILNKAAPLPFHAHENPGEETRLKYRYLDLRRPEMQRMQRTRIKLVQALRRHLDARDFQDIETPILTKATPEGARDFLVPARMHPGEFYALPQSPQLFKQILMVAGFDRYYQIARCFRDEALRADRQLEFTQLDMEFAFVRERDVQDFVEDMMRAIFKEVVDVDLAAQFPRMTWAEAMRRYGSDKPDLRIALELVDVAELVKSSEFPVFTAAANDADGRVAALRIPGGATLSRKQIDDYAAHAAKYGAKGLAYIKLSETGEVSSPIAKFFSEEAFAALLKHVGAGNGDIVFFGAGGYTKVSDFMGALRLKAGKEFDLVAEGWAPLWVTDFPMFEWDEEAQRYVALHHPFTAPAVDDIADLRANARTAVSRGYDMVLNGNEIGGGSIRIHRPDMQSAVFELLGIGAEEARAKFGFLLDALNYGAPPHGGIAFGIDRIAALMAGTESIRDVIPFPKTTGAQDLMTDAPSPIAADQLAEVHVQVRSKQV.

E174 lines the L-aspartate pocket. The aspartate stretch occupies residues 198 to 201 (QLFK). Position 220 (R220) interacts with L-aspartate. Residues 220 to 222 (RDE) and Q229 contribute to the ATP site. H448 is a binding site for L-aspartate. E482 lines the ATP pocket. Position 489 (R489) interacts with L-aspartate. 534–537 (GIDR) is an ATP binding site.

Belongs to the class-II aminoacyl-tRNA synthetase family. Type 1 subfamily. Homodimer.

The protein localises to the cytoplasm. It carries out the reaction tRNA(Asp) + L-aspartate + ATP = L-aspartyl-tRNA(Asp) + AMP + diphosphate. Its function is as follows. Catalyzes the attachment of L-aspartate to tRNA(Asp) in a two-step reaction: L-aspartate is first activated by ATP to form Asp-AMP and then transferred to the acceptor end of tRNA(Asp). This Xanthomonas oryzae pv. oryzae (strain MAFF 311018) protein is Aspartate--tRNA ligase.